Consider the following 215-residue polypeptide: uncharacterized protein (215 aa).

This is an uncharacterized protein from Acanthamoeba polyphaga mimivirus (APMV).